Here is a 444-residue protein sequence, read N- to C-terminus: Tol-Pal system protein TolB (444 aa).

The first 26 residues, 1 to 26 (MTLFRTLAPMGLALALLLPAAVPAAA), serve as a signal peptide directing secretion. The span at 281–310 (IYTLDTGSGTRRQLTNSPSIETAPSYSPDG) shows a compositional bias: polar residues. Positions 281–311 (IYTLDTGSGTRRQLTNSPSIETAPSYSPDGS) are disordered.

This sequence belongs to the TolB family. In terms of assembly, the Tol-Pal system is composed of five core proteins: the inner membrane proteins TolA, TolQ and TolR, the periplasmic protein TolB and the outer membrane protein Pal. They form a network linking the inner and outer membranes and the peptidoglycan layer.

It is found in the periplasm. In terms of biological role, part of the Tol-Pal system, which plays a role in outer membrane invagination during cell division and is important for maintaining outer membrane integrity. In Cereibacter sphaeroides (strain ATCC 17029 / ATH 2.4.9) (Rhodobacter sphaeroides), this protein is Tol-Pal system protein TolB.